The sequence spans 141 residues: 6,7-dimethyl-8-ribityllumazine synthase (141 aa).

Residues Phe-14, 46-48 (VFD), and 70-72 (CVI) each bind 5-amino-6-(D-ribitylamino)uracil. 75 to 76 (ET) provides a ligand contact to (2S)-2-hydroxy-3-oxobutyl phosphate. His-78 serves as the catalytic Proton donor. Leu-103 is a 5-amino-6-(D-ribitylamino)uracil binding site. A (2S)-2-hydroxy-3-oxobutyl phosphate-binding site is contributed by Arg-118.

Forms an icosahedral capsid composed of 60 subunits, arranged as a dodecamer of pentamers.

The catalysed reaction is (2S)-2-hydroxy-3-oxobutyl phosphate + 5-amino-6-(D-ribitylamino)uracil = 6,7-dimethyl-8-(1-D-ribityl)lumazine + phosphate + 2 H2O + H(+). The protein operates within cofactor biosynthesis; riboflavin biosynthesis; riboflavin from 2-hydroxy-3-oxobutyl phosphate and 5-amino-6-(D-ribitylamino)uracil: step 1/2. Functionally, catalyzes the formation of 6,7-dimethyl-8-ribityllumazine by condensation of 5-amino-6-(D-ribitylamino)uracil with 3,4-dihydroxy-2-butanone 4-phosphate. This is the penultimate step in the biosynthesis of riboflavin. The sequence is that of 6,7-dimethyl-8-ribityllumazine synthase (ribH) from Methanocaldococcus jannaschii (strain ATCC 43067 / DSM 2661 / JAL-1 / JCM 10045 / NBRC 100440) (Methanococcus jannaschii).